We begin with the raw amino-acid sequence, 174 residues long: Adipose-secreted signaling protein (174 aa).

An N-acetylalanine modification is found at A2. T147 is modified (phosphothreonine).

It belongs to the ADISSP family.

The protein localises to the secreted. Functionally, adipocyte-secreted protein (adipokine) that acts as a key regulator for white adipose tissue (WAT) thermogenesis and glucose homeostasis at least in part through activation of protein kinase A (PKA). The protein is Adipose-secreted signaling protein of Bos taurus (Bovine).